Consider the following 437-residue polypeptide: Aspartic proteinase CDR1 (437 aa).

An N-terminal signal peptide occupies residues 1 to 25; the sequence is MASLFSSVLLSLCLLSSLFLSNANA. The propeptide at 26-73 is activation peptide; the sequence is KPKLGFTADLIHRDSPKSPFYNPMETSSQRLRNAIHRSVNRVFHFTEK. The 341-residue stretch at 90-430 folds into the Peptidase A1 domain; sequence YLMNVSIGTP…DTVSKTVSFK (341 aa). Asn-93 carries N-linked (GlcNAc...) asparagine glycosylation. Residues Asp-108 and Asp-319 contribute to the active site.

It belongs to the peptidase A1 family.

It is found in the secreted. It localises to the extracellular space. The protein resides in the apoplast. Functionally, involved in salicylic acid-dependent inducible resistance responses. May release an endogenous peptide elicitor required for the activation of inducible resistance mechanisms. Possesses protease activity in vitro. The polypeptide is Aspartic proteinase CDR1 (CDR1) (Arabidopsis thaliana (Mouse-ear cress)).